The primary structure comprises 181 residues: Regulator of G-protein signaling 10 (181 aa).

The tract at residues 1-35 is disordered; the sequence is MFTRAVSRLSRKRPPSDIHDGDGSSSSGHQSLKST. Phosphoserine is present on residues Ser-24 and Ser-41. Residues 41–156 form the RGS domain; sequence SLENLLEDPE…LKSDLFLKHR (116 aa). Residue Cys-74 is the site of S-palmitoyl cysteine attachment. The segment at 157-181 is disordered; the sequence is RTEEEEEDPPDAQTAAKRASRIYNT. Position 176 is a phosphoserine (Ser-176).

Interacts with GNAZ, GNAI1 and GNAI3. Associates specifically with the activated, GTP-bound forms of GNAZ and GNAI3.

The protein localises to the cytoplasm. Its subcellular location is the cytosol. It localises to the nucleus. In terms of biological role, regulates G protein-coupled receptor signaling cascades, including signaling downstream of the muscarinic acetylcholine receptor CHRM2. Inhibits signal transduction by increasing the GTPase activity of G protein alpha subunits, thereby driving them into their inactive GDP-bound form. Modulates the activity of potassium channels that are activated in response to CHRM2 signaling. Activity on GNAZ is inhibited by palmitoylation of the G-protein. In Rattus norvegicus (Rat), this protein is Regulator of G-protein signaling 10 (Rgs10).